A 615-amino-acid chain; its full sequence is Erythritol-mannosyl-transferase 1 (615 aa).

The interval 366-387 (RTPNNTGASTPTAPISSPDFEE) is disordered. A compositionally biased stretch (polar residues) spans 367–380 (TPNNTGASTPTAPI).

The protein belongs to the UDP-glycosyltransferase family.

Its subcellular location is the vacuole membrane. It participates in secondary metabolite biosynthesis. Erythritol-mannosyl-transferase; part of the gene cluster that mediates the biosynthesis of mannosylerythritol lipids (MELs), surface-active substances that enhance the availability of water-insoluble substrates. Mannosylerythritol lipid production is responsible for hemolytic activity of Ustilago maydis. Depending on the number of acetyl groups, mannosylerythritol lipids can be differentiated into MEL A (fully acetylated), MEL B and MEL C (monoacetylated at R-6 and R-4, respectively), and the fully deacetylated MEL D. The first step in the pathway is the generation of mannosylerythritol by the glycosyltransferase EMT1 which catalyzes the transfer of GDP-mannose to the C-4 atom of meso-erythritol. This reaction has to be stereospecific, since only mannosyl-D-erythritol is generated. The produced disaccharide is subsequently acylated with fatty acids of various lengths derived from the peroxisomal beta-oxidation by the peroxisomal acyltransferases MAC1 and MAC2 at positions C-2 and C-3, repectively. The existence of MEL derivatives which carry an acetyl group at C-2 implies that at least MAC1 also accepts acetyl-CoA as a donor. The final step of MEL biosynthesis is the acetylation of the fully acylated mannosylerythritol lipids catalyzed by the acetyl-CoA-dependent acetyltransferase MAT1. MAT1 displays a relaxed regioselectivity and is able to transfer acetylgroups to both positions C-4 and C-6 of the mannosyl moiety. The protein is Erythritol-mannosyl-transferase 1 of Mycosarcoma maydis (Corn smut fungus).